The sequence spans 270 residues: Putative pyruvate, phosphate dikinase regulatory protein (270 aa).

153-160 (GVSRTSKT) contacts ADP.

Belongs to the pyruvate, phosphate/water dikinase regulatory protein family. PDRP subfamily.

The enzyme catalyses N(tele)-phospho-L-histidyl/L-threonyl-[pyruvate, phosphate dikinase] + ADP = N(tele)-phospho-L-histidyl/O-phospho-L-threonyl-[pyruvate, phosphate dikinase] + AMP + H(+). The catalysed reaction is N(tele)-phospho-L-histidyl/O-phospho-L-threonyl-[pyruvate, phosphate dikinase] + phosphate + H(+) = N(tele)-phospho-L-histidyl/L-threonyl-[pyruvate, phosphate dikinase] + diphosphate. In terms of biological role, bifunctional serine/threonine kinase and phosphorylase involved in the regulation of the pyruvate, phosphate dikinase (PPDK) by catalyzing its phosphorylation/dephosphorylation. The protein is Putative pyruvate, phosphate dikinase regulatory protein of Halalkalibacterium halodurans (strain ATCC BAA-125 / DSM 18197 / FERM 7344 / JCM 9153 / C-125) (Bacillus halodurans).